The sequence spans 386 residues: Palmitoyltransferase ZDHHC18 (386 aa).

The interval 1–65 is disordered; it reads MKDCEYQQIS…GSGSLGRRPR (65 aa). Over 1-88 the chain is Cytoplasmic; it reads MKDCEYQQIS…CGGRLMLAGH (88 aa). S19 carries the phosphoserine modification. Over residues 27-40 the composition is skewed to pro residues; the sequence is PAAPPGPSPGPAPG. The span at 49–59 shows a compositional bias: gly residues; it reads SGSGSGSGSGS. A helical transmembrane segment spans residues 89 to 109; it reads GGVFALTLLLILSTTILFFIF. At 110 to 117 the chain is on the lumenal side; that stretch reads DCPYLART. Residues 118–138 form a helical membrane-spanning segment; it reads LTLAIPIIAAILFFFVMSCLL. At 139–233 the chain is on the cytoplasmic side; it reads QTSFTDPGIL…GNCVGRRNYR (95 aa). Residues 190 to 240 enclose the DHHC domain; sequence KYCFTCKMFRPPRTSHCSVCDNCVERFDHHCPWVGNCVGRRNYRFFYAFIL. The active-site S-palmitoyl cysteine intermediate is C220. Residues 234 to 254 traverse the membrane as a helical segment; sequence FFYAFILSLSFLTAFIFACVV. The Lumenal segment spans residues 255–275; sequence THLTLLSQGSNFLSALNKTPA. A helical transmembrane segment spans residues 276–296; that stretch reads GVLELVICFFSIWSILGLSGF. Topologically, residues 297–386 are cytoplasmic; sequence HTYLVASNLT…PDASMVGGHP (90 aa). The interval 362–386 is disordered; it reads LPSPIRSDEPACGAKPDASMVGGHP.

Belongs to the DHHC palmitoyltransferase family. ERF2/ZDHHC9 subfamily.

Its subcellular location is the golgi apparatus membrane. It carries out the reaction L-cysteinyl-[protein] + hexadecanoyl-CoA = S-hexadecanoyl-L-cysteinyl-[protein] + CoA. Palmitoyltransferase that catalyzes the addition of palmitate onto various protein substrates, such as CGAS, HRAS and LCK. Acts as a negative regulator of the cGAS-STING pathway be mediating palmitoylation and inactivation of CGAS. May also have a palmitoyltransferase activity toward the beta-2 adrenergic receptor/ADRB2 and therefore regulate G protein-coupled receptor signaling. The protein is Palmitoyltransferase ZDHHC18 of Rattus norvegicus (Rat).